A 488-amino-acid polypeptide reads, in one-letter code: UDP-N-acetylmuramoyl-L-alanyl-D-glutamate--2,6-diaminopimelate ligase (488 aa).

UDP-N-acetyl-alpha-D-muramoyl-L-alanyl-D-glutamate is bound by residues Leu24, Ser26, and 41 to 43 (HQV). 113 to 119 (GTNGKTT) serves as a coordination point for ATP. Residues Asn154, 155 to 156 (TT), Ser182, Gln188, and Arg190 contribute to the UDP-N-acetyl-alpha-D-muramoyl-L-alanyl-D-glutamate site. N6-carboxylysine is present on Lys222. Meso-2,6-diaminopimelate-binding positions include Arg386, 410–413 (DNPR), Gly461, and Glu465. Residues 410–413 (DNPR) carry the Meso-diaminopimelate recognition motif motif.

Belongs to the MurCDEF family. MurE subfamily. Mg(2+) serves as cofactor. In terms of processing, carboxylation is probably crucial for Mg(2+) binding and, consequently, for the gamma-phosphate positioning of ATP.

The protein resides in the cytoplasm. It carries out the reaction UDP-N-acetyl-alpha-D-muramoyl-L-alanyl-D-glutamate + meso-2,6-diaminopimelate + ATP = UDP-N-acetyl-alpha-D-muramoyl-L-alanyl-gamma-D-glutamyl-meso-2,6-diaminopimelate + ADP + phosphate + H(+). The protein operates within cell wall biogenesis; peptidoglycan biosynthesis. Functionally, catalyzes the addition of meso-diaminopimelic acid to the nucleotide precursor UDP-N-acetylmuramoyl-L-alanyl-D-glutamate (UMAG) in the biosynthesis of bacterial cell-wall peptidoglycan. This chain is UDP-N-acetylmuramoyl-L-alanyl-D-glutamate--2,6-diaminopimelate ligase, found in Haemophilus influenzae (strain 86-028NP).